A 237-amino-acid chain; its full sequence is tRNA (guanine-N(7)-)-methyltransferase (237 aa).

S-adenosyl-L-methionine contacts are provided by Asp35, Glu60, Asn87, and Asp113. Residue Asp113 is part of the active site. Residues Lys117 and Asp149 each coordinate substrate.

It belongs to the class I-like SAM-binding methyltransferase superfamily. TrmB family.

It carries out the reaction guanosine(46) in tRNA + S-adenosyl-L-methionine = N(7)-methylguanosine(46) in tRNA + S-adenosyl-L-homocysteine. It participates in tRNA modification; N(7)-methylguanine-tRNA biosynthesis. Functionally, catalyzes the formation of N(7)-methylguanine at position 46 (m7G46) in tRNA. The sequence is that of tRNA (guanine-N(7)-)-methyltransferase from Synechococcus sp. (strain CC9311).